The chain runs to 1194 residues: ATP-dependent RNA helicase DHX30 (1194 aa).

Basic and acidic residues predominate over residues 1–10 (MFTLDSFRKD). Residues 1 to 27 (MFTLDSFRKDRTQHRQRQCKLPPPRLP) form a disordered region. A Phosphoserine modification is found at S6. In terms of domain architecture, DRBM spans 53 to 121 (PKNLLNSVIG…QAAAAACQLF (69 aa)). Residues 153-200 (WWRPEPTMPPTSWRQLNPENIRPAGTGGLSRSLGREEEEDEEEELEEG) form a disordered region. Over residues 188–200 (EEEEDEEEELEEG) the composition is skewed to acidic residues. Phosphoserine occurs at positions 226 and 380. The Helicase ATP-binding domain maps to 444 to 612 (LSAIEQHPVV…FGGCPVIKVP (169 aa)). Residue 457–464 (GDTGCGKT) coordinates ATP. Residues 559 to 562 (DEVH) carry the DEAH box motif. A Helicase C-terminal domain is found at 654–827 (LVTDLVLHID…NLVLQAKIHM (174 aa)).

The protein belongs to the DEAD box helicase family. DEAH subfamily. In terms of assembly, identified in a complex with TFAM and SSBP1. Interacts (via N-terminus) with ZC3HAV1 (via N-terminal domain) in an RNA-independent manner. Found in a complex with GRSF1, DDX28, FASTKD2 and FASTKD5.

Its subcellular location is the cytoplasm. The protein localises to the mitochondrion. It localises to the mitochondrion matrix. It is found in the mitochondrion nucleoid. It catalyses the reaction ATP + H2O = ADP + phosphate + H(+). In terms of biological role, RNA-dependent helicase. Plays an important role in the assembly of the mitochondrial large ribosomal subunit. Associates with mitochondrial DNA. Required for optimal function of the zinc-finger antiviral protein ZC3HAV1. Involved in nervous system development and differentiation through its involvement in the up-regulation of a number of genes which are required for neurogenesis, including GSC, NCAM1, neurogenin, and NEUROD. This chain is ATP-dependent RNA helicase DHX30 (Dhx30), found in Rattus norvegicus (Rat).